The sequence spans 650 residues: MTSQEYYTQVQILKKMAYHYYVLDEPIATDEQYDSLYHQIVRFEEENPHLIDASSPTQRVGDVPLESFSKNTHLERMWSLEDVFNYDELVEWVQRIYKSYPQATFTCSPKFDGASLNLLYQEGKLVSATTRGDGVIGELVTHNAKTIQSIPLEINYKEEIEIRGEVVIAKEDFEYINQDRLSENLSLFANPRNAAAGSLRQLDAKITAKRKLRFMPWGIGAGLIRFESFYEAFNTITRLGFAPVPFLSYCESIESIQNAYNVLFSQRNNYPIMLDGMVIMLDKIASQQQLGWTIKSPRFACAYKFPAVEKSSKILSVSLQVGRTGIITPVAELKPVEIEGAMISRATLHNFSEIERKDIRLGDEVIIIRSGDVIPKIIKPLVALRDGTQKVISKPTHCPVCGEELLLEDIFIKCQNLSCEARVIESIIHFASKKALNIDGLGEKIVIQLYENAFVRNIKDIYALSIQQLLTLEGWQEKRANNLIYAIQNTIGVELWRFINALGIEHIGEGASKKLAQKFGLNVFELELSEILSVDGFGEEMAYSLVEFNHANKTLIAELLCIIKPKVELLEIDNNNVFFNKTIVLTGTLSQPRDRIIKLLESKGAKISSSVSKKTDFVIYGEKAGSKLEKAQSLNITTLNEEEFLAQINK.

NAD(+) is bound by residues 30–34 and 79–80; these read DEQYD and SL. The active-site N6-AMP-lysine intermediate is the K110. R131, E165, and K304 together coordinate NAD(+). Zn(2+) contacts are provided by C398, C401, C414, and C419. The region spanning 573-650 is the BRCT domain; that stretch reads DNNNVFFNKT…EEEFLAQINK (78 aa).

Belongs to the NAD-dependent DNA ligase family. LigA subfamily. The cofactor is Mg(2+). Requires Mn(2+) as cofactor.

It catalyses the reaction NAD(+) + (deoxyribonucleotide)n-3'-hydroxyl + 5'-phospho-(deoxyribonucleotide)m = (deoxyribonucleotide)n+m + AMP + beta-nicotinamide D-nucleotide.. DNA ligase that catalyzes the formation of phosphodiester linkages between 5'-phosphoryl and 3'-hydroxyl groups in double-stranded DNA using NAD as a coenzyme and as the energy source for the reaction. It is essential for DNA replication and repair of damaged DNA. The protein is DNA ligase of Helicobacter hepaticus (strain ATCC 51449 / 3B1).